The following is a 466-amino-acid chain: Asparagine--tRNA ligase (466 aa).

This sequence belongs to the class-II aminoacyl-tRNA synthetase family. In terms of assembly, homodimer.

Its subcellular location is the cytoplasm. The enzyme catalyses tRNA(Asn) + L-asparagine + ATP = L-asparaginyl-tRNA(Asn) + AMP + diphosphate + H(+). The chain is Asparagine--tRNA ligase from Shewanella baltica (strain OS195).